A 414-amino-acid polypeptide reads, in one-letter code: Probable 26S proteasome regulatory subunit 6B (414 aa).

Residue 202–209 (GPPGCGKT) participates in ATP binding.

It belongs to the AAA ATPase family.

The protein resides in the cytoplasm. Its subcellular location is the nucleus. Functionally, the 26S proteasome is involved in the ATP-dependent degradation of ubiquitinated proteins. The regulatory (or ATPase) complex confers ATP dependency and substrate specificity to the 26S complex. This is Probable 26S proteasome regulatory subunit 6B (rpt-3) from Caenorhabditis elegans.